Reading from the N-terminus, the 299-residue chain is Nicotinate-nucleotide pyrophosphorylase [carboxylating] (299 aa).

Residues 8 to 12 are important for hexamer formation; sequence FLLPP. Residues arginine 102, 138 to 139, 160 to 161, lysine 171, glutamate 201, aspartate 222, 248 to 250, and glycine 270 each bind quinolinate; these read RK, HR, and SGG.

The protein belongs to the NadC/ModD family. In terms of assembly, hexamer formed by 3 homodimers.

It catalyses the reaction nicotinate beta-D-ribonucleotide + CO2 + diphosphate = quinolinate + 5-phospho-alpha-D-ribose 1-diphosphate + 2 H(+). The protein operates within cofactor biosynthesis; NAD(+) biosynthesis; nicotinate D-ribonucleotide from quinolinate: step 1/1. In terms of biological role, involved in the catabolism of quinolinic acid (QA). The polypeptide is Nicotinate-nucleotide pyrophosphorylase [carboxylating] (Qprt) (Rattus norvegicus (Rat)).